The primary structure comprises 394 residues: Cell division protein FtsZ (394 aa).

GTP-binding positions include 21–25 (GGGNN), Arg29, 108–110 (GTG), Glu139, Arg143, Asn166, and Asp187. Residues 317–394 (DKPSSQGRKA…EERRSRRTRR (78 aa)) are disordered. Low complexity-rich tracts occupy residues 328 to 346 (STGFGSSVNSSSNHQSGAS) and 353 to 364 (SAHTSHSQSSES). The span at 365–388 (VSERSHTTKDDDIPSFIRNREERR) shows a compositional bias: basic and acidic residues.

It belongs to the FtsZ family. As to quaternary structure, homodimer. Polymerizes to form a dynamic ring structure in a strictly GTP-dependent manner. Interacts directly with several other division proteins.

The protein resides in the cytoplasm. In terms of biological role, essential cell division protein that forms a contractile ring structure (Z ring) at the future cell division site. The regulation of the ring assembly controls the timing and the location of cell division. One of the functions of the FtsZ ring is to recruit other cell division proteins to the septum to produce a new cell wall between the dividing cells. Binds GTP and shows GTPase activity. The chain is Cell division protein FtsZ from Staphylococcus epidermidis (strain ATCC 35984 / DSM 28319 / BCRC 17069 / CCUG 31568 / BM 3577 / RP62A).